A 562-amino-acid chain; its full sequence is 2-succinyl-5-enolpyruvyl-6-hydroxy-3-cyclohexene-1-carboxylate synthase (562 aa).

It belongs to the TPP enzyme family. MenD subfamily. As to quaternary structure, homodimer. Mg(2+) serves as cofactor. The cofactor is Mn(2+). Thiamine diphosphate is required as a cofactor.

It carries out the reaction isochorismate + 2-oxoglutarate + H(+) = 5-enolpyruvoyl-6-hydroxy-2-succinyl-cyclohex-3-ene-1-carboxylate + CO2. It participates in quinol/quinone metabolism; 1,4-dihydroxy-2-naphthoate biosynthesis; 1,4-dihydroxy-2-naphthoate from chorismate: step 2/7. The protein operates within cofactor biosynthesis; phylloquinone biosynthesis. Catalyzes the thiamine diphosphate-dependent decarboxylation of 2-oxoglutarate and the subsequent addition of the resulting succinic semialdehyde-thiamine pyrophosphate anion to isochorismate to yield 2-succinyl-5-enolpyruvyl-6-hydroxy-3-cyclohexene-1-carboxylate (SEPHCHC). The protein is 2-succinyl-5-enolpyruvyl-6-hydroxy-3-cyclohexene-1-carboxylate synthase of Thermosynechococcus vestitus (strain NIES-2133 / IAM M-273 / BP-1).